The sequence spans 235 residues: RNA polymerase sigma factor SigI7 (235 aa).

The Polymerase core binding motif lies at 49–62 (DELSIALMAFVETI). Positions 191 to 210 (VAEIEQSLKIPRKTIERARK) form a DNA-binding region, H-T-H motif.

Belongs to the sigma-70 factor family. SigI subfamily. As to quaternary structure, interacts with RsgI7.

Its subcellular location is the cytoplasm. With respect to regulation, negatively regulated by the anti-sigma-I factor RsgI7. In terms of biological role, sigma factors are initiation factors that promote the attachment of RNA polymerase to specific initiation sites and are then released. The chain is RNA polymerase sigma factor SigI7 from Acetivibrio thermocellus (strain ATCC 27405 / DSM 1237 / JCM 9322 / NBRC 103400 / NCIMB 10682 / NRRL B-4536 / VPI 7372) (Clostridium thermocellum).